Reading from the N-terminus, the 473-residue chain is Photosystem II CP43 reaction center protein (473 aa).

Positions 1-14 are excised as a propeptide; it reads MKTLYSLRRFYHVE. Position 15 is an N-acetylthreonine (Thr-15). Thr-15 carries the post-translational modification Phosphothreonine. Helical transmembrane passes span 69–93, 134–155, 178–200, 255–275, and 291–312; these read LFEVAHFVPEKPMYEQGLILLPHLA, LLGPETLEESFPFFGYVWKDRN, KALYFGGIYDTWAPGGGDVRKIT, KPFAWARRALVWSGEAYLSYS, and WFNNTAYPSEFYGPTGPEASQA. Glu-367 lines the [CaMn4O5] cluster pocket. Residues 447–471 form a helical membrane-spanning segment; that stretch reads RARAAAAGFEKGIDRDFEPVLSMTP.

The protein belongs to the PsbB/PsbC family. PsbC subfamily. In terms of assembly, PSII is composed of 1 copy each of membrane proteins PsbA, PsbB, PsbC, PsbD, PsbE, PsbF, PsbH, PsbI, PsbJ, PsbK, PsbL, PsbM, PsbT, PsbX, PsbY, PsbZ, Psb30/Ycf12, at least 3 peripheral proteins of the oxygen-evolving complex and a large number of cofactors. It forms dimeric complexes. The cofactor is Binds multiple chlorophylls and provides some of the ligands for the Ca-4Mn-5O cluster of the oxygen-evolving complex. It may also provide a ligand for a Cl- that is required for oxygen evolution. PSII binds additional chlorophylls, carotenoids and specific lipids..

The protein localises to the plastid. It is found in the chloroplast thylakoid membrane. Functionally, one of the components of the core complex of photosystem II (PSII). It binds chlorophyll and helps catalyze the primary light-induced photochemical processes of PSII. PSII is a light-driven water:plastoquinone oxidoreductase, using light energy to abstract electrons from H(2)O, generating O(2) and a proton gradient subsequently used for ATP formation. The chain is Photosystem II CP43 reaction center protein from Phaseolus vulgaris (Kidney bean).